A 776-amino-acid chain; its full sequence is Calcium-independent phospholipase A2-gamma (776 aa).

2 stretches are compositionally biased toward basic and acidic residues: residues 226 to 238 (RQLQ…EESK) and 307 to 331 (LKSD…ICKD). 2 disordered regions span residues 226-274 (RQLQ…EALP) and 306-331 (KLKS…ICKD). The PNPLA domain maps to 439-634 (LAIDGGGTRG…LLNNPSALAL (196 aa)). Positions 443 to 448 (GGGTRG) match the GXGXXG motif. A helical transmembrane segment spans residues 469-489 (LFDYICGVSTGAILAFMLGLF). Residues 475 to 479 (GVSTG) carry the GXSXG motif. Ser-477 (nucleophile) is an active-site residue. Residue Asp-621 is the Proton acceptor of the active site. The DGA/G signature appears at 621 to 623 (DGG). Lys-730 bears the N6-succinyllysine mark.

Its subcellular location is the endoplasmic reticulum membrane. It is found in the microsome membrane. It localises to the mitochondrion membrane. The protein localises to the peroxisome membrane. It carries out the reaction a 1,2-diacyl-sn-glycero-3-phosphocholine + H2O = a 1-acyl-sn-glycero-3-phosphocholine + a fatty acid + H(+). The enzyme catalyses a 1,2-diacyl-sn-glycero-3-phosphocholine + H2O = a 2-acyl-sn-glycero-3-phosphocholine + a fatty acid + H(+). The catalysed reaction is a 1,2-diacyl-sn-glycero-3-phosphoethanolamine + H2O = a 1-acyl-sn-glycero-3-phosphoethanolamine + a fatty acid + H(+). It catalyses the reaction a 1-O-(1Z-alkenyl)-2-acyl-sn-glycero-3-phosphocholine + H2O = a 1-O-(1Z-alkenyl)-sn-glycero-3-phosphocholine + a fatty acid + H(+). It carries out the reaction a 1-acyl-sn-glycero-3-phosphocholine + H2O = sn-glycerol 3-phosphocholine + a fatty acid + H(+). The enzyme catalyses 1-acyl-2-(9Z,12Z)-octadecadienoyl-sn-glycero-3-phosphocholine + H2O = a 1-acyl-sn-glycero-3-phosphocholine + (9Z,12Z)-octadecadienoate + H(+). The catalysed reaction is 1-acyl-2-(5Z,8Z,11Z,14Z-eicosatetraenoyl)-sn-glycero-3-phosphocholine + H2O = a 1-acyl-sn-glycero-3-phosphocholine + (5Z,8Z,11Z,14Z)-eicosatetraenoate + H(+). It catalyses the reaction 1-hexadecanoyl-2-(5Z,8Z,11Z,14Z-eicosatetraenoyl)-sn-glycero-3-phosphocholine + H2O = 1-hexadecanoyl-sn-glycero-3-phosphocholine + (5Z,8Z,11Z,14Z)-eicosatetraenoate + H(+). It carries out the reaction 1-octadecanoyl-2-(9Z-octadecenoyl)-sn-glycero-3-phosphocholine + H2O = 1-octadecanoyl-sn-glycero-3-phosphocholine + (9Z)-octadecenoate + H(+). The enzyme catalyses 1-hexadecanoyl-2-(9Z-octadecenoyl)-sn-glycero-3-phosphocholine + H2O = 1-hexadecanoyl-sn-glycero-3-phosphocholine + (9Z)-octadecenoate + H(+). The catalysed reaction is 1-hexadecanoyl-2-(9Z,12Z-octadecadienoyl)-sn-glycero-3-phosphocholine + H2O = (9Z,12Z)-octadecadienoate + 1-hexadecanoyl-sn-glycero-3-phosphocholine + H(+). It catalyses the reaction 1-acyl-2-(9Z,12Z)-octadecadienoyl-sn-glycero-3-phosphoethanolamine + H2O = a 1-acyl-sn-glycero-3-phosphoethanolamine + (9Z,12Z)-octadecadienoate + H(+). It carries out the reaction 1-acyl-2-(5Z,8Z,11Z,14Z)-eicosatetraenoyl-sn-glycero-3-phosphoethanolamine + H2O = a 1-acyl-sn-glycero-3-phosphoethanolamine + (5Z,8Z,11Z,14Z)-eicosatetraenoate + H(+). The enzyme catalyses 1-hexadecanoyl-2-(5Z,8Z,11Z,14Z-eicosatetraenoyl)-sn-glycero-3-phosphoethanolamine + H2O = 1-hexadecanoyl-sn-glycero-3-phosphoethanolamine + (5Z,8Z,11Z,14Z)-eicosatetraenoate + H(+). The catalysed reaction is 1-hexadecanoyl-2-(5Z,8Z,11Z,14Z-eicosatetraenoyl)-sn-glycero-3-phosphocholine + H2O = 2-(5Z,8Z,11Z,14Z)-eicosatetraenoyl-sn-glycero-3-phosphocholine + hexadecanoate + H(+). It catalyses the reaction 1-octadecanoyl-2-(9Z-octadecenoyl)-sn-glycero-3-phosphocholine + H2O = 2-(9Z-octadecenoyl)-sn-glycero-3-phosphocholine + octadecanoate + H(+). It carries out the reaction 1-hexadecanoyl-2-(4Z,7Z,10Z,13Z,16Z,19Z-docosahexaenoyl)-sn-glycero-3-phosphocholine + H2O = 2-(4Z,7Z,10Z,13Z,16Z,19Z-docosahexaenoyl)-sn-glycero-3-phosphocholine + hexadecanoate + H(+). The enzyme catalyses 1-O-(1Z)-hexadecenyl-2 (5Z,8Z,11Z,14Z)-eicosatetraenoyl-sn-glycero-3-phosphocholine + H2O = 1-(1Z-hexadecenyl)-sn-glycero-3-phosphocholine + (5Z,8Z,11Z,14Z)-eicosatetraenoate + H(+). The catalysed reaction is 1-O-(1Z-hexadecenyl)-2-(9Z-octadecenoyl)-sn-glycero-3-phosphocholine + H2O = 1-(1Z-hexadecenyl)-sn-glycero-3-phosphocholine + (9Z)-octadecenoate + H(+). It catalyses the reaction 1-hexadecanoyl-sn-glycero-3-phosphocholine + H2O = sn-glycerol 3-phosphocholine + hexadecanoate + H(+). It carries out the reaction 1',3'-bis-[1,2-di-(9Z,12Z-octadecadienoyl)-sn-glycero-3-phospho]-glycerol + H2O = 1'-[1,2-di-(9Z,12Z-octadecadienoyl)-sn-glycero-3-phospho]-3'-[1-(9Z,12Z-octadecadienoyl)-sn-glycero-3-phospho]-glycerol + (9Z,12Z)-octadecadienoate + H(+). The enzyme catalyses 1'-[1-acyl-2-(9-hydroxy-(10E,12Z)-octadecadienoyl)-sn-glycero-3-phospho]-3'-[1,2-diacyl-sn-glycero-3-phospho]-glycerol + H2O = 9-hydroxy-(10E,12Z)-octadecadienoate + 1'-[1,2-diacyl-sn-glycero-3-phospho],3'-[1-acyl-sn-glycero-3-phospho]-glycerol + H(+). It functions in the pathway phospholipid metabolism. Its activity is regulated as follows. Calcium-independent phospholipase. Its function is as follows. Calcium-independent and membrane-bound phospholipase, that catalyzes the esterolytic cleavage of fatty acids from glycerophospholipids to yield free fatty acids and lysophospholipids, hence regulating membrane physical properties and the release of lipid second messengers and growth factors. Hydrolyzes phosphatidylethanolamine, phosphatidylcholine and probably phosphatidylinositol with a possible preference for the former. Has also a broad substrate specificity in terms of fatty acid moieties, hydrolyzing saturated and mono-unsaturated fatty acids at nearly equal rates from either the sn-1 or sn-2 position in diacyl phosphatidylcholine. However, has a weak activity toward polyunsaturated fatty acids at the sn-2 position, and thereby favors the production of 2-arachidonoyl lysophosphatidylcholine, a key branch point metabolite in eicosanoid signaling. On the other hand, can produce arachidonic acid from the sn-1 position of diacyl phospholipid and from the sn-2 position of arachidonate-containing plasmalogen substrates. Therefore, plays an important role in the mobilization of arachidonic acid in response to cellular stimuli and the generation of lipid second messengers. Can also hydrolyze lysophosphatidylcholine. In the mitochondrial compartment, catalyzes the hydrolysis and release of oxidized aliphatic chains from cardiolipin and integrates mitochondrial bioenergetics and signaling. It is essential for maintaining efficient bioenergetic mitochondrial function through tailoring mitochondrial membrane lipid metabolism and composition. The protein is Calcium-independent phospholipase A2-gamma of Rattus norvegicus (Rat).